A 1009-amino-acid chain; its full sequence is DENN domain-containing protein 2A (1009 aa).

Disordered stretches follow at residues 15 to 153 (AEAS…LRFQ), 171 to 334 (KDGS…HRKS), 434 to 479 (KLLD…KKRK), and 498 to 532 (KRVK…LKAH). Basic and acidic residues-rich tracts occupy residues 45 to 59 (NIKD…KKEV), 130 to 147 (QPER…EPRL), 218 to 247 (HPSD…DRSL), and 275 to 284 (HAGEGDKDGK). Residues 297-314 (PPLPSLPPPPLPSSPPPS) show a composition bias toward pro residues. Residues 434–443 (KLLDTRKLSR) show a composition bias toward basic and acidic residues. Residues 503–513 (LSQSMESNSGK) are compositionally biased toward polar residues. Ser-551 carries the post-translational modification Phosphoserine. The uDENN domain maps to 566–715 (EYFVVVSLHK…PFPALGKTIL (150 aa)). One can recognise a cDENN domain in the interval 737 to 870 (RLEHVDFESL…LQVALEHILE (134 aa)). The dDENN domain maps to 872–969 (RNELACEQDE…QERELRRQDA (98 aa)).

The protein localises to the cytoplasm. It is found in the cytoskeleton. In terms of biological role, guanine nucleotide exchange factor (GEF) which may activate RAB9A and RAB9B. Promotes the exchange of GDP to GTP, converting inactive GDP-bound Rab proteins into their active GTP-bound form. May play a role in late endosomes back to trans-Golgi network/TGN transport. The sequence is that of DENN domain-containing protein 2A (DENND2A) from Homo sapiens (Human).